The chain runs to 561 residues: Putative transport protein YbjL (561 aa).

5 consecutive transmembrane segments (helical) span residues 8–28, 32–52, 66–86, 94–114, and 158–178; these read LLNGNYILLLFVVLALGLCLG, LGSIQLGNSIGVLVVSLLLGQ, FMLFIFCVGVEAGPNFFSIFF, MLALVMVGSALVIALGLGKLF, and NLSLGYALTYLIGLVSLIVGA. RCK C-terminal domains follow at residues 200–288 and 292–373; these read RGLD…SFRN and VFDR…RIGF. Transmembrane regions (helical) follow at residues 383–403, 406–426, 451–471, 475–495, 503–523, and 540–560; these read LLAFCAFFVIGLMIGMITFQF, FSFGMGNAAGLLFAGIMLGFM, VFMAGVGLSAGSGINNGLGAI, MLIAGLIVSLVPVVICFLFGA, ALLFGAMMGARTCAPAMEIIS, and AIANVLLTLAGTIIVMVCPGL.

This sequence belongs to the AAE transporter (TC 2.A.81) family. YbjL subfamily.

The protein localises to the cell membrane. The polypeptide is Putative transport protein YbjL (Shigella dysenteriae serotype 1 (strain Sd197)).